The chain runs to 486 residues: UDP-N-acetylmuramate--L-alanine ligase (486 aa).

123–129 (GTHGKTT) is a binding site for ATP.

The protein belongs to the MurCDEF family.

Its subcellular location is the cytoplasm. It catalyses the reaction UDP-N-acetyl-alpha-D-muramate + L-alanine + ATP = UDP-N-acetyl-alpha-D-muramoyl-L-alanine + ADP + phosphate + H(+). It functions in the pathway cell wall biogenesis; peptidoglycan biosynthesis. Its function is as follows. Cell wall formation. In Pseudomonas syringae pv. syringae (strain B728a), this protein is UDP-N-acetylmuramate--L-alanine ligase.